A 715-amino-acid chain; its full sequence is Elongation factor G (715 aa).

The tr-type G domain maps to 12–309 (RRVRNIGIMA…GVIDYLPSPL (298 aa)). Residues 21 to 28 (AHIDAGKT), 108 to 112 (DTPGH), and 162 to 165 (NKMD) each bind GTP.

This sequence belongs to the TRAFAC class translation factor GTPase superfamily. Classic translation factor GTPase family. EF-G/EF-2 subfamily.

It localises to the cytoplasm. Functionally, catalyzes the GTP-dependent ribosomal translocation step during translation elongation. During this step, the ribosome changes from the pre-translocational (PRE) to the post-translocational (POST) state as the newly formed A-site-bound peptidyl-tRNA and P-site-bound deacylated tRNA move to the P and E sites, respectively. Catalyzes the coordinated movement of the two tRNA molecules, the mRNA and conformational changes in the ribosome. The polypeptide is Elongation factor G (Rubrobacter xylanophilus (strain DSM 9941 / JCM 11954 / NBRC 16129 / PRD-1)).